Reading from the N-terminus, the 484-residue chain is 6-phosphogluconate dehydrogenase, decarboxylating (484 aa).

Residues glycine 11 to glycine 16, asparagine 34 to threonine 36, valine 76 to alanine 78, and asparagine 104 each bind NADP(+). Substrate-binding positions include asparagine 104 and serine 130–glycine 132. Lysine 185 acts as the Proton acceptor in catalysis. Position 188-189 (histidine 188–asparagine 189) interacts with substrate. Glutamate 192 (proton donor) is an active-site residue. 5 residues coordinate substrate: tyrosine 193, lysine 262, arginine 289, arginine 447, and histidine 453.

It belongs to the 6-phosphogluconate dehydrogenase family. In terms of assembly, homodimer.

The catalysed reaction is 6-phospho-D-gluconate + NADP(+) = D-ribulose 5-phosphate + CO2 + NADPH. Its pathway is carbohydrate degradation; pentose phosphate pathway; D-ribulose 5-phosphate from D-glucose 6-phosphate (oxidative stage): step 3/3. Its function is as follows. Catalyzes the oxidative decarboxylation of 6-phosphogluconate to ribulose 5-phosphate and CO(2), with concomitant reduction of NADP to NADPH. In Haemophilus ducreyi (strain 35000HP / ATCC 700724), this protein is 6-phosphogluconate dehydrogenase, decarboxylating (gnd).